We begin with the raw amino-acid sequence, 156 residues long: Small ribosomal subunit protein uS7 (156 aa).

The protein belongs to the universal ribosomal protein uS7 family. In terms of assembly, part of the 30S ribosomal subunit. Contacts proteins S9 and S11.

One of the primary rRNA binding proteins, it binds directly to 16S rRNA where it nucleates assembly of the head domain of the 30S subunit. Is located at the subunit interface close to the decoding center, probably blocks exit of the E-site tRNA. The chain is Small ribosomal subunit protein uS7 from Microcystis aeruginosa (strain NIES-843 / IAM M-2473).